Consider the following 267-residue polypeptide: Outer membrane protein assembly factor BamD (267 aa).

The first 16 residues, 1–16 (MKKILLTVSLGLALSA), serve as a signal peptide directing secretion. The N-palmitoyl cysteine moiety is linked to residue cysteine 17. Residue cysteine 17 is the site of S-diacylglycerol cysteine attachment.

This sequence belongs to the BamD family. As to quaternary structure, part of the Bam complex.

Its subcellular location is the cell outer membrane. In terms of biological role, part of the outer membrane protein assembly complex, which is involved in assembly and insertion of beta-barrel proteins into the outer membrane. Required for efficient transformation of Neisseria meningitidis by species-related DNA. This is Outer membrane protein assembly factor BamD from Neisseria meningitidis serogroup B (strain ATCC BAA-335 / MC58).